The chain runs to 780 residues: Nuclear cap-binding protein subunit 1 (780 aa).

Positions 1 to 25 are disordered; sequence MSSYRGSTRPRKRTREGENYGFRPH. At Ser-29 the chain carries Phosphoserine. The MIF4G domain occupies 34 to 249; it reads AARIKKDITF…KQLILSREND (216 aa). Residues 738–780 are disordered; it reads ANEPVQENTSEEQEDTKMQPVDAVDEQPSENNQTAADATNEEK.

This sequence belongs to the NCBP1 family. Component of the nuclear cap-binding complex (CBC), a heterodimer composed of cbc1 and cbc2 that interacts with capped RNAs.

The protein localises to the cytoplasm. It localises to the perinuclear region. Its subcellular location is the nucleus. In terms of biological role, component of the CBC complex, which binds cotranscriptionally to the 5'-cap of pre-mRNAs and is involved in maturation, export and degradation of nuclear mRNAs. The protein is Nuclear cap-binding protein subunit 1 (cbc1) of Schizosaccharomyces pombe (strain 972 / ATCC 24843) (Fission yeast).